The sequence spans 286 residues: D-tagatose-1,6-bisphosphate aldolase subunit KbaY (286 aa).

Residue aspartate 82 is the Proton donor of the active site. Residues histidine 83 and histidine 180 each coordinate Zn(2+). Glycine 181 serves as a coordination point for dihydroxyacetone phosphate. Histidine 208 lines the Zn(2+) pocket. Dihydroxyacetone phosphate-binding positions include 209–211 (GAS) and 230–233 (NVAT).

This sequence belongs to the class II fructose-bisphosphate aldolase family. TagBP aldolase KbaY subfamily. In terms of assembly, homotetramer. Forms a complex with KbaZ. Zn(2+) serves as cofactor.

It carries out the reaction D-tagatofuranose 1,6-bisphosphate = D-glyceraldehyde 3-phosphate + dihydroxyacetone phosphate. The protein operates within carbohydrate metabolism; D-tagatose 6-phosphate degradation; D-glyceraldehyde 3-phosphate and glycerone phosphate from D-tagatose 6-phosphate: step 2/2. Its function is as follows. Catalytic subunit of the tagatose-1,6-bisphosphate aldolase KbaYZ, which catalyzes the reversible aldol condensation of dihydroxyacetone phosphate (DHAP or glycerone-phosphate) with glyceraldehyde 3-phosphate (G3P) to produce tagatose 1,6-bisphosphate (TBP). Requires KbaZ subunit for full activity and stability. In Escherichia coli O45:K1 (strain S88 / ExPEC), this protein is D-tagatose-1,6-bisphosphate aldolase subunit KbaY.